A 563-amino-acid chain; its full sequence is Putative GMC-type oxidoreductase L128 (563 aa).

An N-terminal signal peptide occupies residues 1 to 21 (MTSSIVLKFFLIATLLVIANS). An FAD-binding site is contributed by 48–77 (DYVIVGGGAAGSVLLDKCISYGYKCTLIER). His504 (proton acceptor) is an active-site residue.

The protein belongs to the GMC oxidoreductase family. It depends on FAD as a cofactor.

The protein is Putative GMC-type oxidoreductase L128 of Acanthamoeba polyphaga mimivirus (APMV).